Here is a 451-residue protein sequence, read N- to C-terminus: Signal transduction histidine-protein kinase ArlS (451 aa).

2 helical membrane passes run 11 to 31 (IIVT…IIIF) and 156 to 176 (IIAL…SYVF). An HAMP domain is found at 178–231 (TQITKPLVSLSNKMIEIRRDGFQNKLQLNTNYEEIDNLANTFNEMMSQIEESFN). The 213-residue stretch at 239–451 (DASHELRTPL…NKGTTFKIIF (213 aa)) folds into the Histidine kinase domain. His-242 carries the phosphohistidine; by autocatalysis modification.

Post-translationally, autophosphorylated.

The protein resides in the cell membrane. The catalysed reaction is ATP + protein L-histidine = ADP + protein N-phospho-L-histidine.. Member of the two-component regulatory system ArlS/ArlR involved in the regulation of adhesion, autolysis, multidrug resistance and virulence. ArlS probably functions as a sensor protein kinase which is autophosphorylated at a histidine residue and transfers its phosphate group to ArlR. The polypeptide is Signal transduction histidine-protein kinase ArlS (arlS) (Staphylococcus aureus (strain MRSA252)).